The primary structure comprises 235 residues: Bypass of stop codon protein 2 (235 aa).

A helical membrane pass occupies residues 68–88 (FGIFQLMCSLGVIVLLLPIII). A Phosphoserine modification is found at serine 177.

It is found in the lipid droplet. Its subcellular location is the membrane. This Saccharomyces cerevisiae (strain ATCC 204508 / S288c) (Baker's yeast) protein is Bypass of stop codon protein 2 (BSC2).